Here is a 432-residue protein sequence, read N- to C-terminus: MGSCSLQLPLINLADKTLEPGSSKWAEVRSDVRKALEDFGCFEASYDKVSLELQESIMKTMEELFALPVETKQRNVCPKPYVGYLNHNNLSESLGISNANILENVNEFTQQLWPDGDGNENISKTIQLFAEKLVEIDVMVRRMVMESFGIEKYIDDHLKSTEYRMRLMKYIAPPEGDANTTVDDYADLLAKLNIDGVEPNVGVKVNADISDDVNANPSVNAGVGANVNADTGVNDNLNVDAEANGDANIAVGGGVNANTDLGVGVNVNSNVAVNAKTGATSGDDVEANDDNEEKKLGLPCHTDKNLFTVLFQHEIEGLEVKTKDEKWIRVKPSPNTFIVIAGDSLCALMNGRIRAPYHRVRVTEKKRTRYTAAIFTCPKPDYVIEAPKELVDEKHPRLFRPFDYRDLFTFYHSEAGRKIQYTLQAYCAVSEA.

The Fe2OG dioxygenase domain occupies 281–378 (SGDDVEANDD…RYTAAIFTCP (98 aa)). His-301, Asp-303, and His-358 together coordinate Fe cation. Arg-369 provides a ligand contact to 2-oxoglutarate.

This sequence belongs to the iron/ascorbate-dependent oxidoreductase family. Fe(2+) is required as a cofactor.

Functionally, 2-oxoglutarate-dependent dioxygenase involved in glucosinolates biosynthesis. Catalyzes the conversion of methylsulfinylalkyl glucosinolates to alkenyl glucosinolates. This chain is 2-oxoglutarate-dependent dioxygenase AOP2 (AOP2), found in Arabidopsis thaliana (Mouse-ear cress).